The following is a 332-amino-acid chain: 5-dehydro-2-deoxygluconokinase 2 (332 aa).

It belongs to the carbohydrate kinase PfkB family.

It catalyses the reaction 5-dehydro-2-deoxy-D-gluconate + ATP = 6-phospho-5-dehydro-2-deoxy-D-gluconate + ADP + H(+). It functions in the pathway polyol metabolism; myo-inositol degradation into acetyl-CoA; acetyl-CoA from myo-inositol: step 5/7. Its function is as follows. Catalyzes the phosphorylation of 5-dehydro-2-deoxy-D-gluconate (2-deoxy-5-keto-D-gluconate or DKG) to 6-phospho-5-dehydro-2-deoxy-D-gluconate (DKGP). The protein is 5-dehydro-2-deoxygluconokinase 2 of Bacillus cereus (strain ZK / E33L).